A 343-amino-acid polypeptide reads, in one-letter code: GTPase Obg (343 aa).

In terms of domain architecture, Obg spans 1-157; the sequence is MKFIDEVSIS…IEVRLELKLI (157 aa). Positions 13 to 44 are disordered; the sequence is SGRGGPGCVSFRRESMQARGGPDGGNGGKGGD. Residues 33 to 43 are compositionally biased toward gly residues; sequence GPDGGNGGKGG. One can recognise an OBG-type G domain in the interval 158–338; the sequence is ADVGIVGFPN…FVQELARQIL (181 aa). GTP is bound by residues 164–171, 189–193, 211–214, 290–293, and 319–321; these read GFPNAGKS, FTTLT, DIPG, NKID, and SAV. Serine 171 and threonine 191 together coordinate Mg(2+).

This sequence belongs to the TRAFAC class OBG-HflX-like GTPase superfamily. OBG GTPase family. In terms of assembly, monomer. Requires Mg(2+) as cofactor.

It localises to the cytoplasm. In terms of biological role, an essential GTPase which binds GTP, GDP and possibly (p)ppGpp with moderate affinity, with high nucleotide exchange rates and a fairly low GTP hydrolysis rate. Plays a role in control of the cell cycle, stress response, ribosome biogenesis and in those bacteria that undergo differentiation, in morphogenesis control. The protein is GTPase Obg of Bdellovibrio bacteriovorus (strain ATCC 15356 / DSM 50701 / NCIMB 9529 / HD100).